The sequence spans 859 residues: Probable potassium transporter 14 (859 aa).

Gly residues predominate over residues 1–19 (METRSGGSGSASGGGGGGR). Residues 1–69 (METRSGGSGS…SRGGCSDSDD (69 aa)) form a disordered region. The Cytoplasmic portion of the chain corresponds to 1–112 (METRSGGSGS…RHQEITVGRS (112 aa)). Low complexity predominate over residues 54-65 (PAAASGSRGGCS). The chain crosses the membrane as a helical span at residues 113–133 (IVLAVQTLGVVFGDVGTSPLY). The Extracellular segment spans residues 134 to 155 (AFDVMFNKYPITSKEDVLGALS). The helical transmembrane segment at 156–176 (LVIYTLILIPLLKYTLIALWG) threads the bilayer. Topologically, residues 177–240 (NDDGEGGTFA…RLETSSMLKK (64 aa)) are cytoplasmic. Residues 241-261 (LLLMLVLFGTSMVIADGVVTP) form a helical membrane-spanning segment. The Extracellular segment spans residues 262–275 (AMSVMSAVNGLKVG). A helical membrane pass occupies residues 276 to 296 (ISSVNEGEVVMITVAVLIVLF). Residues 297-305 (TLQRFGSSK) lie on the Cytoplasmic side of the membrane. A helical transmembrane segment spans residues 306-326 (VALAVGPALFIWFCCLAGIGI). Residues 327–359 (YNMKTYGSAVLQAFNPMYIYYYFERNPTQAWMS) are Extracellular-facing. A helical transmembrane segment spans residues 360-380 (LGGCLLCATGSEAMFADLCYF). At 381–388 (SVKSVQLT) the chain is on the cytoplasmic side. Residues 389 to 409 (FVFLVLPCLLLGYLGQAAFLM) form a helical membrane-spanning segment. Residues 410 to 417 (ENLTENQQ) are Extracellular-facing. Asparagine 411 is a glycosylation site (N-linked (GlcNAc...) asparagine). The chain crosses the membrane as a helical span at residues 418 to 438 (VFFLSIPNQAFWPVVFIAILA). Over 439–478 (AIIASRTMTTAIFSTIKQATALGCFPRLKIIHTSRSFMGQ) the chain is Cytoplasmic. Residues 479 to 499 (IYIPMMNWFLLVSCLAFVTMF) traverse the membrane as a helical segment. Residues 500–508 (GSINEIGNA) lie on the Extracellular side of the membrane. Residues 509–531 (YGIAELGVMMMTTVLVTIIMLLI) traverse the membrane as a helical segment. The Cytoplasmic segment spans residues 532–535 (WQIN). The chain crosses the membrane as a helical span at residues 536 to 558 (IIVVLCFLTLSLGLELIFFSSVL). Residues 559 to 560 (GS) lie on the Extracellular side of the membrane. The helical transmembrane segment at 561-581 (VADGSWVLLVFAAVLYLIMYI) threads the bilayer. Over 582–859 (WNYGTKLKYE…MMQVAMQYMV (278 aa)) the chain is Cytoplasmic. Residues 752–772 (GVPPAEAAGTTEHPTIGSSMS) form a disordered region. Over residues 763-772 (EHPTIGSSMS) the composition is skewed to polar residues.

Belongs to the HAK/KUP transporter (TC 2.A.72.3) family.

The protein resides in the membrane. Functionally, high-affinity potassium transporter. In Oryza sativa subsp. japonica (Rice), this protein is Probable potassium transporter 14 (HAK14).